The chain runs to 227 residues: Rho-related GTP-binding protein RhoN (227 aa).

14–21 contributes to the GTP binding site; sequence GDAECGKT. The Effector region signature appears at 36 to 44; sequence YVPTVFENY. GTP contacts are provided by residues 61–65 and 119–122; these read DTSGS and CKLD. A disordered region spans residues 186 to 227; it reads HRQLRRTDSRRGLQRSTQLSGRPDRGNEGEMHKDRAKSCNLM. Over residues 207 to 227 the composition is skewed to basic and acidic residues; sequence RPDRGNEGEMHKDRAKSCNLM. Cysteine methyl ester is present on Cys224. Cys224 is lipidated: S-geranylgeranyl cysteine. A propeptide spans 225 to 227 (removed in mature form); that stretch reads NLM.

Belongs to the small GTPase superfamily. Rho family. Interacts with the Rho-GAP domain of RACGAP1. Interacts with UBXD5. Interacts with PRAG1. Expressed specifically in neurons in the brain and spinal cord and also in hepatic stellate cells.

Its subcellular location is the cytoplasmic vesicle. The protein localises to the secretory vesicle. The protein resides in the acrosome membrane. Its function is as follows. May be specifically involved in neuronal and hepatic functions. Is a C3 toxin-insensitive member of the Rho subfamily. In Mus musculus (Mouse), this protein is Rho-related GTP-binding protein RhoN (Rnd2).